Reading from the N-terminus, the 207-residue chain is Large ribosomal subunit protein uL4 (207 aa).

The interval 45–78 is disordered; the sequence is RQGTHAVKNRSAVRGGGRKPWRQKGTGRARQGSI. The span at 60 to 71 shows a compositional bias: basic residues; sequence GGRKPWRQKGTG.

Belongs to the universal ribosomal protein uL4 family. As to quaternary structure, part of the 50S ribosomal subunit.

In terms of biological role, one of the primary rRNA binding proteins, this protein initially binds near the 5'-end of the 23S rRNA. It is important during the early stages of 50S assembly. It makes multiple contacts with different domains of the 23S rRNA in the assembled 50S subunit and ribosome. Forms part of the polypeptide exit tunnel. The sequence is that of Large ribosomal subunit protein uL4 from Pediococcus pentosaceus (strain ATCC 25745 / CCUG 21536 / LMG 10740 / 183-1w).